A 162-amino-acid chain; its full sequence is Peptidyl-prolyl cis-trans isomerase-like 1 (162 aa).

The PPIase cyclophilin-type domain maps to 1 to 155 (MATDVTFDTS…DEVKILRAKV (155 aa)).

This sequence belongs to the cyclophilin-type PPIase family. PPIL1 subfamily.

It catalyses the reaction [protein]-peptidylproline (omega=180) = [protein]-peptidylproline (omega=0). In terms of biological role, PPIases accelerate the folding of proteins. It catalyzes the cis-trans isomerization of proline imidic peptide bonds in oligopeptides. The sequence is that of Peptidyl-prolyl cis-trans isomerase-like 1 (cyp1) from Emericella nidulans (strain FGSC A4 / ATCC 38163 / CBS 112.46 / NRRL 194 / M139) (Aspergillus nidulans).